The chain runs to 288 residues: Diaminopimelate epimerase (288 aa).

Residues Asn14 and Asn67 each coordinate substrate. Cys76 serves as the catalytic Proton donor. Residues 77-78, Asn166, Asn199, and 217-218 contribute to the substrate site; these read GN and ER. The Proton acceptor role is filled by Cys226. 227–228 is a binding site for substrate; it reads GT.

The protein belongs to the diaminopimelate epimerase family. As to quaternary structure, homodimer.

It localises to the cytoplasm. It carries out the reaction (2S,6S)-2,6-diaminopimelate = meso-2,6-diaminopimelate. It functions in the pathway amino-acid biosynthesis; L-lysine biosynthesis via DAP pathway; DL-2,6-diaminopimelate from LL-2,6-diaminopimelate: step 1/1. Its function is as follows. Catalyzes the stereoinversion of LL-2,6-diaminopimelate (L,L-DAP) to meso-diaminopimelate (meso-DAP), a precursor of L-lysine and an essential component of the bacterial peptidoglycan. The polypeptide is Diaminopimelate epimerase (Bacillus cereus (strain ATCC 10987 / NRS 248)).